The primary structure comprises 507 residues: Dihydrolipoyl dehydrogenase 1, mitochondrial (507 aa).

A mitochondrion-targeting transit peptide spans 1-36 (MAMASLARRKAYFLTRNLSNSPTDALRFSFSLSRGF). FAD contacts are provided by residues 73–82 (EKRGALGGTC), K91, G155, and 184–186 (TGS). C82 and C87 are disulfide-bonded. Residues 221 to 228 (GAGYIGLE), E244, V278, and G313 each bind NAD(+). FAD contacts are provided by residues D354 and 360 to 363 (MLAH). Catalysis depends on H486, which acts as the Proton acceptor.

It belongs to the class-I pyridine nucleotide-disulfide oxidoreductase family. Homodimer. Part of both the glycine cleavage system composed of four proteins: P, T, L and H and of the pyruvate dehydrogenase complex containing multiple copies of three enzymatic components: pyruvate dehydrogenase (E1), dihydrolipoamide acetyltransferase (E2) and lipoamide dehydrogenase (E3). FAD is required as a cofactor. In terms of processing, S-nytrosylated at unknown positions. In terms of tissue distribution, preferentially expressed in leaves, flowers and siliques and at a lower level in roots and stems.

The protein resides in the mitochondrion matrix. It carries out the reaction N(6)-[(R)-dihydrolipoyl]-L-lysyl-[protein] + NAD(+) = N(6)-[(R)-lipoyl]-L-lysyl-[protein] + NADH + H(+). Its function is as follows. Lipoamide dehydrogenase is a component of the glycine decarboxylase (GDC) or glycine cleavage system as well as of the alpha-ketoacid dehydrogenase complexes. LPD1 is probably the protein most often associated with the glycine decarboxylase complex while LPD2 is probably incorporated into alpha-ketoacid dehydrogenase complexes. In Arabidopsis thaliana (Mouse-ear cress), this protein is Dihydrolipoyl dehydrogenase 1, mitochondrial (LPD1).